The sequence spans 421 residues: ATP-dependent RNA helicase eIF4A (421 aa).

Positions 1-26 (MSNDKGLEEIPEDQSTTPHKPTSNVG) are disordered. Residues 13 to 26 (DQSTTPHKPTSNVG) are compositionally biased toward polar residues. The Q motif motif lies at 48–76 (DSFDAMELKPELLRGVYAYGFERPSAIQQ). Residues 79–249 (IKPIIKGSDV…TKFMRDPVRI (171 aa)) enclose the Helicase ATP-binding domain. 92 to 99 (AQSGTGKT) contributes to the ATP binding site. Positions 197-200 (DEAD) match the DEAD box motif. In terms of domain architecture, Helicase C-terminal spans 260–421 (GIKQFYIAVE…EMPMNVADLI (162 aa)).

The protein belongs to the DEAD box helicase family. eIF4A subfamily. In terms of assembly, component of the eIF4F complex, which composition varies with external and internal environmental conditions. It is composed of at least eIF4A, eIF4E and eIF4G.

It localises to the cytoplasm. It catalyses the reaction ATP + H2O = ADP + phosphate + H(+). ATP-dependent RNA helicase which is a subunit of the eIF4F complex involved in cap recognition and is required for mRNA binding to ribosome. In the current model of translation initiation, eIF4A unwinds RNA secondary structures in the 5'-UTR of mRNAs which is necessary to allow efficient binding of the small ribosomal subunit, and subsequent scanning for the initiator codon. This chain is ATP-dependent RNA helicase eIF4A (tif1), found in Aspergillus oryzae (strain ATCC 42149 / RIB 40) (Yellow koji mold).